We begin with the raw amino-acid sequence, 279 residues long: Large ribosomal subunit protein uL2 (279 aa).

The segment at 223–279 (VVMNPVDHPHGGGEGRTSGGRHPVTPWGKPTKGKRTRSNKKTDSLIMRSRHLAKKKR) is disordered. A compositionally biased stretch (basic residues) spans 270–279 (RSRHLAKKKR).

Belongs to the universal ribosomal protein uL2 family. As to quaternary structure, part of the 50S ribosomal subunit. Forms a bridge to the 30S subunit in the 70S ribosome.

One of the primary rRNA binding proteins. Required for association of the 30S and 50S subunits to form the 70S ribosome, for tRNA binding and peptide bond formation. It has been suggested to have peptidyltransferase activity; this is somewhat controversial. Makes several contacts with the 16S rRNA in the 70S ribosome. This Rhodospirillum rubrum (strain ATCC 11170 / ATH 1.1.1 / DSM 467 / LMG 4362 / NCIMB 8255 / S1) protein is Large ribosomal subunit protein uL2.